A 268-amino-acid polypeptide reads, in one-letter code: MALNFPNIDPVIVKFGPFDIFGQTFEPALRWYGFTYLVGFVAAMWLLNRQADRSNGLWSREQVSDLLFYGFLGVILGGRIGYVLFYHFDYFLASPMYLFKISEGGMSFHGGLMGVITAMIYIAWKQKRTFFAVADMVAPVVPIGLGAGRIGNFINGELWGRVTDVPWAMVFPSGGPEPRHPSQLYQFALEGVALFLLLYWFSKRTKKVGAVSGMFLLGYGIFRVIVETVRQPDAQLGLYWGFMTMGQILSVPMILFGLYLILRPEGKQ.

7 helical membrane passes run 27–47 (PALRWYGFTYLVGFVAAMWLL), 66–86 (LLFYGFLGVILGGRIGYVLFY), 104–124 (GGMSFHGGLMGVITAMIYIAW), 130–150 (FFAVADMVAPVVPIGLGAGRI), 181–201 (PSQLYQFALEGVALFLLLYWF), 208–228 (VGAVSGMFLLGYGIFRVIVET), and 242–262 (FMTMGQILSVPMILFGLYLIL). Arginine 149 is an a 1,2-diacyl-sn-glycero-3-phospho-(1'-sn-glycerol) binding site.

This sequence belongs to the Lgt family.

The protein resides in the cell inner membrane. The catalysed reaction is L-cysteinyl-[prolipoprotein] + a 1,2-diacyl-sn-glycero-3-phospho-(1'-sn-glycerol) = an S-1,2-diacyl-sn-glyceryl-L-cysteinyl-[prolipoprotein] + sn-glycerol 1-phosphate + H(+). It functions in the pathway protein modification; lipoprotein biosynthesis (diacylglyceryl transfer). In terms of biological role, catalyzes the transfer of the diacylglyceryl group from phosphatidylglycerol to the sulfhydryl group of the N-terminal cysteine of a prolipoprotein, the first step in the formation of mature lipoproteins. This is Phosphatidylglycerol--prolipoprotein diacylglyceryl transferase from Shewanella sp. (strain ANA-3).